A 405-amino-acid chain; its full sequence is Acetate kinase (405 aa).

A Mg(2+)-binding site is contributed by asparagine 7. Lysine 14 provides a ligand contact to ATP. Arginine 98 contacts substrate. The active-site Proton donor/acceptor is the aspartate 155. ATP-binding positions include 215–219 (HLGNG), 289–291 (DMR), and 337–341 (GIGEN). Glutamate 391 is a Mg(2+) binding site.

This sequence belongs to the acetokinase family. In terms of assembly, homodimer. Requires Mg(2+) as cofactor. The cofactor is Mn(2+).

Its subcellular location is the cytoplasm. The catalysed reaction is acetate + ATP = acetyl phosphate + ADP. It functions in the pathway metabolic intermediate biosynthesis; acetyl-CoA biosynthesis; acetyl-CoA from acetate: step 1/2. In terms of biological role, catalyzes the formation of acetyl phosphate from acetate and ATP. Can also catalyze the reverse reaction. This chain is Acetate kinase, found in Desulfotalea psychrophila (strain LSv54 / DSM 12343).